Reading from the N-terminus, the 163-residue chain is Transcriptional repressor NrdR (163 aa).

A zinc finger lies at 3 to 34 (CPFCAYADTRVVDSRLADDGGSVRRRRECPQC). Residues 49–139 (PVVVKTDGRR…VYRRFEDVDA (91 aa)) form the ATP-cone domain.

Belongs to the NrdR family. It depends on Zn(2+) as a cofactor.

Negatively regulates transcription of bacterial ribonucleotide reductase nrd genes and operons by binding to NrdR-boxes. The polypeptide is Transcriptional repressor NrdR (Acidithiobacillus ferrooxidans (strain ATCC 23270 / DSM 14882 / CIP 104768 / NCIMB 8455) (Ferrobacillus ferrooxidans (strain ATCC 23270))).